The sequence spans 586 residues: Ezrin (586 aa).

The region spanning 2-296 is the FERM domain; that stretch reads PKPINVRVTT…NHELYMRRRK (295 aa). Position 60 is an N6-acetyllysine (lysine 60). The [IL]-x-C-x-x-[DE] motif motif lies at 115–120; sequence IYCPPE. Tyrosine 146 carries the phosphotyrosine; by PDGFR modification. The segment at 244 to 586 is interaction with SCYL3; the sequence is EIRNISFNDK…KQRIDEFEAL (343 aa). Positions 302–462 form a coiled coil; it reads VQQMKAQARE…QDDLVKTKEE (161 aa). The interval 306-341 is disordered; the sequence is KAQAREEKHQKQLERQQLETEKKRRETVEREKEQMM. Residues 308–341 show a composition bias toward basic and acidic residues; it reads QAREEKHQKQLERQQLETEKKRRETVEREKEQMM. Tyrosine 354 carries the phosphotyrosine; by PDGFR modification. Position 366 is a phosphoserine (serine 366). A Phosphotyrosine modification is found at tyrosine 478. The tract at residues 485–564 is disordered; that stretch reads VQESLQDEGA…NENMRQGRDK (80 aa). Over residues 507–528 the composition is skewed to basic and acidic residues; that stretch reads GIRDDRNEEKRITEAEKNERVQ. Over residues 530-539 the composition is skewed to polar residues; it reads QLLTLSSELS. Serine 535 carries the post-translational modification Phosphoserine. Basic and acidic residues predominate over residues 540–564; that stretch reads QARDENKRTHNDIIHNENMRQGRDK. Residue threonine 567 is modified to Phosphothreonine; by ROCK2 and PKC/PRKCI.

In terms of assembly, monomer. Homodimer. Interacts with PALS1 and NHERF2. Found in a complex with EZR, PODXL and NHERF2. Interacts with MCC, PLEKHG6, PODXL, SCYL3/PACE1, NHERF1 and TMEM8B. Interacts (when phosphorylated) with FES/FPS. Interacts with dimeric S100P, the interaction may be activating through unmasking of F-actin binding sites. Identified in complexes that contain VIM, EZR, AHNAK, BFSP1, BFSP2, ANK2, PLEC, PRX and spectrin. Detected in a complex composed of at least EZR, AHNAK, PPL and PRX. Interacts with PDPN (via cytoplasmic domain); activates RHOA and promotes epithelial-mesenchymal transition. Interacts with SPN/CD43 cytoplasmic tail, CD44 and ICAM2. Interacts with SLC9A3; interaction targets SLC9A3 to the apical membrane. Interacts with SLC9A1; regulates interactions of SLC9A1 with cytoskeletal and promotes stress fiber formation. Interacts with CLIC5; may work together in a complex which also includes RDX and MYO6 to stabilize linkages between the plasma membrane and subjacent actin cytoskeleton at the base of stereocilia. Post-translationally, phosphorylated by tyrosine-protein kinases. Phosphorylation by ROCK2 suppresses the head-to-tail association of the N-terminal and C-terminal halves resulting in an opened conformation which is capable of actin and membrane-binding. In terms of processing, S-nitrosylation is induced by interferon-gamma and oxidatively-modified low-densitity lipoprotein (LDL(ox)) possibly implicating the iNOS-S100A8/9 transnitrosylase complex. In terms of tissue distribution, expressed in cerebral cortex, basal ganglia, hippocampus, hypophysis, and optic nerve. Weakly expressed in brain stem and diencephalon. Stronger expression was detected in gray matter of frontal lobe compared to white matter (at protein level). Component of the microvilli of intestinal epithelial cells. Preferentially expressed in astrocytes of hippocampus, frontal cortex, thalamus, parahippocampal cortex, amygdala, insula, and corpus callosum. Not detected in neurons in most tissues studied.

The protein resides in the apical cell membrane. Its subcellular location is the cell projection. It localises to the microvillus membrane. The protein localises to the ruffle membrane. It is found in the cytoplasm. The protein resides in the cell cortex. Its subcellular location is the cytoskeleton. It localises to the microvillus. With respect to regulation, a head-to-tail association, of the N-terminal and C-terminal halves results in a closed conformation (inactive form) which is incapable of actin or membrane-binding. In terms of biological role, probably involved in connections of major cytoskeletal structures to the plasma membrane. In epithelial cells, required for the formation of microvilli and membrane ruffles on the apical pole. Along with PLEKHG6, required for normal macropinocytosis. The polypeptide is Ezrin (EZR) (Homo sapiens (Human)).